A 247-amino-acid polypeptide reads, in one-letter code: Cell division protein ZapD (247 aa).

The protein belongs to the ZapD family. Interacts with FtsZ.

Its subcellular location is the cytoplasm. In terms of biological role, cell division factor that enhances FtsZ-ring assembly. Directly interacts with FtsZ and promotes bundling of FtsZ protofilaments, with a reduction in FtsZ GTPase activity. The polypeptide is Cell division protein ZapD (Shigella dysenteriae serotype 1 (strain Sd197)).